The chain runs to 190 residues: Abscisic acid receptor PYL2 (190 aa).

Positions phenylalanine 28–threonine 182 are START-like. Residues lysine 64, alanine 93 to glutamate 98, arginine 120 to serine 126, and glutamate 147 contribute to the abscisate site. A Gate loop motif is present at residues serine 89–alanine 93. The Latch loop signature appears at histidine 119–leucine 121.

Belongs to the PYR/PYL/RCAR abscisic acid intracellular receptor family. In terms of assembly, homodimer. Binds ABA on one subunit only. Interacts with HAB1, ABI1 and ABI2, and possibly with other PP2Cs. Binds to CARs protein in an ABA-independent manner, both at the plasma membrane and in the nucleus.

Its subcellular location is the cytoplasm. It localises to the nucleus. The protein resides in the cell membrane. Receptor for abscisic acid (ABA) required for ABA-mediated responses such as stomatal closure and germination inhibition. Inhibits the activity of group-A protein phosphatases type 2C (PP2Cs) when activated by ABA. Can be activated by both (-)-ABA and (+)-ABA. In Arabidopsis thaliana (Mouse-ear cress), this protein is Abscisic acid receptor PYL2 (PYL2).